The following is a 71-amino-acid chain: BBSome-interacting protein 1 (71 aa).

Belongs to the BBIP10 family.

The protein resides in the cell projection. Its subcellular location is the cilium. It is found in the cytoplasm. Required for primary cilia assembly. The sequence is that of BBSome-interacting protein 1 (bbip1) from Nematostella vectensis (Starlet sea anemone).